Reading from the N-terminus, the 172-residue chain is uncharacterized protein (172 aa).

Positions 1-22 are cleaved as a signal peptide; sequence MKLFQLLLLVLTISSFIISNNG. Topologically, residues 23-140 are extracellular; it reads LVESHQGRMH…FSYENSSNET (118 aa). The tract at residues 27-69 is disordered; that stretch reads HQGRMHRGSGERHHRAGGNQQQPQPPSEQQVESSYNSNDDGSS. The span at 29-42 shows a compositional bias: basic residues; sequence GRMHRGSGERHHRA. Positions 53 to 69 are enriched in low complexity; that stretch reads SEQQVESSYNSNDDGSS. Residues N135 and N138 are each glycosylated (N-linked (GlcNAc...) asparagine). A helical transmembrane segment spans residues 141-161; the sequence is IVIYINPVTLVFTLVLLLTFI. The Cytoplasmic segment spans residues 162-172; it reads VLTITQSLRKY.

It localises to the membrane. This is an uncharacterized protein from Dictyostelium discoideum (Social amoeba).